We begin with the raw amino-acid sequence, 145 residues long: 3-dehydroquinate dehydratase (145 aa).

The Proton acceptor role is filled by Tyr-22. Substrate contacts are provided by Asn-71, His-77, and Asp-84. His-97 serves as the catalytic Proton donor. Residues 98 to 99 (IS) and Arg-108 contribute to the substrate site.

It belongs to the type-II 3-dehydroquinase family. As to quaternary structure, homododecamer.

The enzyme catalyses 3-dehydroquinate = 3-dehydroshikimate + H2O. Its pathway is metabolic intermediate biosynthesis; chorismate biosynthesis; chorismate from D-erythrose 4-phosphate and phosphoenolpyruvate: step 3/7. In terms of biological role, catalyzes a trans-dehydration via an enolate intermediate. This is 3-dehydroquinate dehydratase from Exiguobacterium sp. (strain ATCC BAA-1283 / AT1b).